The chain runs to 194 residues: Large ribosomal subunit protein uL6z/uL6y (194 aa).

Threonine 75 carries the post-translational modification Phosphothreonine.

Belongs to the universal ribosomal protein uL6 family.

The polypeptide is Large ribosomal subunit protein uL6z/uL6y (RPL9B) (Arabidopsis thaliana (Mouse-ear cress)).